The following is a 509-amino-acid chain: tRNA-2-methylthio-N(6)-dimethylallyladenosine synthase (509 aa).

The segment at 1–20 (MNEKQKQESGQVNPADKTSE) is disordered. The MTTase N-terminal domain maps to 66 to 184 (RKFYIRTYGC…LPELLSEAYL (119 aa)). The [4Fe-4S] cluster site is built by Cys75, Cys111, Cys145, Cys221, Cys225, and Cys228. The 231-residue stretch at 207–437 (RNGKIKGWVN…NDLVKEISAK (231 aa)) folds into the Radical SAM core domain. Residues 440–503 (KEYEGRTVEV…TWSLDGVMAG (64 aa)) enclose the TRAM domain.

The protein belongs to the methylthiotransferase family. MiaB subfamily. As to quaternary structure, monomer. Requires [4Fe-4S] cluster as cofactor.

It is found in the cytoplasm. It catalyses the reaction N(6)-dimethylallyladenosine(37) in tRNA + (sulfur carrier)-SH + AH2 + 2 S-adenosyl-L-methionine = 2-methylsulfanyl-N(6)-dimethylallyladenosine(37) in tRNA + (sulfur carrier)-H + 5'-deoxyadenosine + L-methionine + A + S-adenosyl-L-homocysteine + 2 H(+). Its function is as follows. Catalyzes the methylthiolation of N6-(dimethylallyl)adenosine (i(6)A), leading to the formation of 2-methylthio-N6-(dimethylallyl)adenosine (ms(2)i(6)A) at position 37 in tRNAs that read codons beginning with uridine. This Bacillus velezensis (strain DSM 23117 / BGSC 10A6 / LMG 26770 / FZB42) (Bacillus amyloliquefaciens subsp. plantarum) protein is tRNA-2-methylthio-N(6)-dimethylallyladenosine synthase.